Consider the following 754-residue polypeptide: 1,4-alpha-glucan branching enzyme GlgB (754 aa).

Residue aspartate 431 is the Nucleophile of the active site. The active-site Proton donor is the glutamate 484.

This sequence belongs to the glycosyl hydrolase 13 family. GlgB subfamily. As to quaternary structure, monomer.

It carries out the reaction Transfers a segment of a (1-&gt;4)-alpha-D-glucan chain to a primary hydroxy group in a similar glucan chain.. It participates in glycan biosynthesis; glycogen biosynthesis. Catalyzes the formation of the alpha-1,6-glucosidic linkages in glycogen by scission of a 1,4-alpha-linked oligosaccharide from growing alpha-1,4-glucan chains and the subsequent attachment of the oligosaccharide to the alpha-1,6 position. This is 1,4-alpha-glucan branching enzyme GlgB from Prochlorococcus marinus subsp. pastoris (strain CCMP1986 / NIES-2087 / MED4).